Reading from the N-terminus, the 540-residue chain is PTS system alpha-glucoside-specific EIICB component (540 aa).

The PTS EIIC type-1 domain occupies 1-420 (MLSQIQRFGG…LNLKTPGREE (420 aa)). A run of 11 helical transmembrane segments spans residues 12 to 32 (MFTPVLLFPFAGIVVGIAIML), 87 to 107 (ACLAVLVSFLTWNYFINAMGM), 130 to 150 (IAGIKTLDTSIIGAIVISGLV), 174 to 194 (FVVIVAFLAMIPCAWLTLLGW), 201 to 221 (IESLQAFLRSAGALGVWVYIF), 225 to 245 (ILIPTGLHHFVYGPFIFGPAV), 277 to 297 (FALHGNSKVFGSVGIALALYF), 307 to 327 (VAGLLIPATLTAMLVGITEPL), 329 to 349 (FTFLFISPLLFAVHAVLAATM), 352 to 372 (VMYICGVVGNFGGGLLDQFLP), and 384 to 404 (SMMFIQIGIGLCFTALYFVVF). One can recognise a PTS EIIB type-1 domain in the interval 448-530 (LGQAAGFLQA…ENLMKDSLST (83 aa)). Cysteine 470 serves as the catalytic Phosphocysteine intermediate; for EIIB activity.

The protein localises to the cell membrane. In terms of biological role, the phosphoenolpyruvate-dependent sugar phosphotransferase system (sugar PTS), a major carbohydrate active -transport system, catalyzes the phosphorylation of incoming sugar substrates concomitantly with their translocation across the cell membrane. This system is involved in alpha-glucoside transport. Involved in the transport and simultaneous phosphorylation at O-6 of the glucosyl moiety of sucrose and its five linkage-isomeric alpha-D-glucosyl-D-fructoses. Can also transport maltose, isomaltose and maltitol, phosphorylating at O-6 of their non-reducing glucose portion. The chain is PTS system alpha-glucoside-specific EIICB component (aglA) from Klebsiella pneumoniae.